The primary structure comprises 141 residues: Large ribosomal subunit protein uL11 (141 aa).

It belongs to the universal ribosomal protein uL11 family. Part of the ribosomal stalk of the 50S ribosomal subunit. Interacts with L10 and the large rRNA to form the base of the stalk. L10 forms an elongated spine to which L12 dimers bind in a sequential fashion forming a multimeric L10(L12)X complex. In terms of processing, one or more lysine residues are methylated.

Forms part of the ribosomal stalk which helps the ribosome interact with GTP-bound translation factors. The polypeptide is Large ribosomal subunit protein uL11 (Ruegeria sp. (strain TM1040) (Silicibacter sp.)).